A 135-amino-acid chain; its full sequence is Phosphoribosyl-AMP cyclohydrolase (135 aa).

D89 is a binding site for Mg(2+). C90 serves as a coordination point for Zn(2+). Mg(2+) contacts are provided by D91 and D93. Zn(2+) contacts are provided by C106 and C113.

Belongs to the PRA-CH family. In terms of assembly, homodimer. Mg(2+) serves as cofactor. The cofactor is Zn(2+).

It is found in the cytoplasm. It carries out the reaction 1-(5-phospho-beta-D-ribosyl)-5'-AMP + H2O = 1-(5-phospho-beta-D-ribosyl)-5-[(5-phospho-beta-D-ribosylamino)methylideneamino]imidazole-4-carboxamide. It functions in the pathway amino-acid biosynthesis; L-histidine biosynthesis; L-histidine from 5-phospho-alpha-D-ribose 1-diphosphate: step 3/9. In terms of biological role, catalyzes the hydrolysis of the adenine ring of phosphoribosyl-AMP. This chain is Phosphoribosyl-AMP cyclohydrolase, found in Bifidobacterium adolescentis (strain ATCC 15703 / DSM 20083 / NCTC 11814 / E194a).